The primary structure comprises 283 residues: 4-diphosphocytidyl-2-C-methyl-D-erythritol kinase (283 aa).

Lys-10 is an active-site residue. An ATP-binding site is contributed by 99–109; that stretch reads PMGGGLGGGSS. Asp-141 is a catalytic residue.

It belongs to the GHMP kinase family. IspE subfamily. In terms of assembly, homodimer.

It catalyses the reaction 4-CDP-2-C-methyl-D-erythritol + ATP = 4-CDP-2-C-methyl-D-erythritol 2-phosphate + ADP + H(+). Its pathway is isoprenoid biosynthesis; isopentenyl diphosphate biosynthesis via DXP pathway; isopentenyl diphosphate from 1-deoxy-D-xylulose 5-phosphate: step 3/6. In terms of biological role, catalyzes the phosphorylation of the position 2 hydroxy group of 4-diphosphocytidyl-2C-methyl-D-erythritol. In Shigella boydii serotype 18 (strain CDC 3083-94 / BS512), this protein is 4-diphosphocytidyl-2-C-methyl-D-erythritol kinase.